Here is a 174-residue protein sequence, read N- to C-terminus: Scytalone dehydratase-like protein Arp1 (174 aa).

Tyr49 serves as a coordination point for substrate. Active-site residues include His84 and His109. Asn130 lines the substrate pocket.

The protein belongs to the scytalone dehydratase family. Homotrimer. Each subunit contains an active site, located in the central part of the hydrophobic core of the monomer, which functions independently.

Functionally, scytalone dehydratase-like protein; part of the Pks2 gene cluster that mediates the formation of infectious structures (appressoria), enabling these fungi to kill insects faster. The product of the Pks2 gene cluster is different from the one of Pks1 and has still not been identified. The protein is Scytalone dehydratase-like protein Arp1 of Metarhizium majus (strain ARSEF 297).